The chain runs to 208 residues: Glutathione S-transferase 1 (208 aa).

Residues 1-80 form the GST N-terminal domain; the sequence is MDFYYLPGSA…YLVEKYGKTD (80 aa). Residues Ser9, 50-52, and 64-66 each bind glutathione; these read HTI and ESR. Residues 86-207 form the GST C-terminal domain; the sequence is CPKKRAVINQ…AGCLEFKKYF (122 aa).

It belongs to the GST superfamily. Theta family. As to quaternary structure, homodimer.

The catalysed reaction is RX + glutathione = an S-substituted glutathione + a halide anion + H(+). Its function is as follows. Conjugation of reduced glutathione to a wide number of exogenous and endogenous hydrophobic electrophiles. This Musca domestica (House fly) protein is Glutathione S-transferase 1 (Gst1).